Reading from the N-terminus, the 137-residue chain is MLNEFRTFINRGNVLDLAVGVIIGAAFTAIINSLVNDIINPLLGLLVGGRTDMSNYFLPLAGQTATTLAEARAAGPVLAYGSFLNAVINFLLVAFVIFLIVRTANRFNPKPAEPPALPQPTPSERLLAEIRDLLAQR.

Transmembrane regions (helical) follow at residues 14-34 and 81-101; these read VLDL…INSL and GSFL…FLIV.

It belongs to the MscL family. As to quaternary structure, homopentamer.

The protein resides in the cell membrane. Channel that opens in response to stretch forces in the membrane lipid bilayer. May participate in the regulation of osmotic pressure changes within the cell. This Chloroflexus aggregans (strain MD-66 / DSM 9485) protein is Large-conductance mechanosensitive channel.